A 120-amino-acid chain; its full sequence is Large ribosomal subunit protein uL18 (120 aa).

Positions 1–10 (MSTPRKEQTQ) are enriched in basic and acidic residues. The segment at 1–25 (MSTPRKEQTQKRHRRLRRHLEGTPE) is disordered.

It belongs to the universal ribosomal protein uL18 family. Part of the 50S ribosomal subunit; part of the 5S rRNA/L5/L18/L25 subcomplex. Contacts the 5S and 23S rRNAs.

Functionally, this is one of the proteins that bind and probably mediate the attachment of the 5S RNA into the large ribosomal subunit, where it forms part of the central protuberance. This is Large ribosomal subunit protein uL18 from Synechococcus sp. (strain RCC307).